The following is a 353-amino-acid chain: UPF0283 membrane protein YPA_1696 (353 aa).

3 helical membrane-spanning segments follow: residues 71 to 91 (MVTA…VQWV), 101 to 121 (IALG…GSVV), and 214 to 234 (ESAL…FIAW).

Belongs to the UPF0283 family.

It localises to the cell inner membrane. This chain is UPF0283 membrane protein YPA_1696, found in Yersinia pestis bv. Antiqua (strain Antiqua).